The sequence spans 400 residues: Enoyl-[acyl-carrier-protein] reductase [NADH] (400 aa).

NAD(+) contacts are provided by residues 74-75 (FE), 111-112 (DA), and 139-140 (VA). Y225 serves as a coordination point for substrate. The active-site Proton donor is the Y235. Residues K244 and 273-275 (VVT) contribute to the NAD(+) site.

This sequence belongs to the TER reductase family. In terms of assembly, monomer.

It carries out the reaction a 2,3-saturated acyl-[ACP] + NAD(+) = a (2E)-enoyl-[ACP] + NADH + H(+). Its pathway is lipid metabolism; fatty acid biosynthesis. Its function is as follows. Involved in the final reduction of the elongation cycle of fatty acid synthesis (FAS II). Catalyzes the reduction of a carbon-carbon double bond in an enoyl moiety that is covalently linked to an acyl carrier protein (ACP). The protein is Enoyl-[acyl-carrier-protein] reductase [NADH] of Psychromonas ingrahamii (strain DSM 17664 / CCUG 51855 / 37).